Consider the following 87-residue polypeptide: Phosphocarrier protein HPr (87 aa).

The HPr domain maps to 2-87; sequence ASKDFHIVAE…NETMTKEGLA (86 aa). His-15 acts as the Pros-phosphohistidine intermediate in catalysis. Ser-46 carries the phosphoserine; by HPrK/P modification.

It belongs to the HPr family.

It localises to the cytoplasm. Its activity is regulated as follows. Phosphorylation on Ser-46 inhibits the phosphoryl transfer from enzyme I to HPr. Functionally, general (non sugar-specific) component of the phosphoenolpyruvate-dependent sugar phosphotransferase system (sugar PTS). This major carbohydrate active-transport system catalyzes the phosphorylation of incoming sugar substrates concomitantly with their translocation across the cell membrane. The phosphoryl group from phosphoenolpyruvate (PEP) is transferred to the phosphoryl carrier protein HPr by enzyme I. Phospho-HPr then transfers it to the PTS EIIA domain. P-Ser-HPr interacts with the catabolite control protein A (CcpA), forming a complex that binds to DNA at the catabolite response elements cre, operator sites preceding a large number of catabolite-regulated genes. Thus, P-Ser-HPr is a corepressor in carbon catabolite repression (CCR), a mechanism that allows bacteria to coordinate and optimize the utilization of available carbon sources. P-Ser-HPr also plays a role in inducer exclusion, in which it probably interacts with several non-PTS permeases and inhibits their transport activity. This chain is Phosphocarrier protein HPr (ptsH), found in Streptococcus mutans serotype c (strain ATCC 700610 / UA159).